Consider the following 279-residue polypeptide: HTH-type transcriptional regulator HdfR (279 aa).

The HTH lysR-type domain maps to 1–58; the sequence is MDTELLKTFLEVSRTRHFGRAAESLYLTQSAVSFRIRQLENQLGVNLFTRHRNNIRLT. A DNA-binding region (H-T-H motif) is located at residues 18 to 37; sequence FGRAAESLYLTQSAVSFRIR.

This sequence belongs to the LysR transcriptional regulatory family.

Functionally, negatively regulates the transcription of the flagellar master operon flhDC by binding to the upstream region of the operon. In Escherichia coli O6:K15:H31 (strain 536 / UPEC), this protein is HTH-type transcriptional regulator HdfR.